We begin with the raw amino-acid sequence, 559 residues long: Urocanate hydratase (559 aa).

Residues 53-54, Gln131, 177-179, Glu197, Arg202, 243-244, 264-268, 274-275, and Tyr323 contribute to the NAD(+) site; these read GG, GMG, NA, QTSAH, and YL. Cys411 is a catalytic residue. Gly493 serves as a coordination point for NAD(+).

The protein belongs to the urocanase family. NAD(+) is required as a cofactor.

It localises to the cytoplasm. The catalysed reaction is 4-imidazolone-5-propanoate = trans-urocanate + H2O. It participates in amino-acid degradation; L-histidine degradation into L-glutamate; N-formimidoyl-L-glutamate from L-histidine: step 2/3. Its function is as follows. Catalyzes the conversion of urocanate to 4-imidazolone-5-propionate. The protein is Urocanate hydratase of Pseudomonas paraeruginosa (strain DSM 24068 / PA7) (Pseudomonas aeruginosa (strain PA7)).